Here is a 207-residue protein sequence, read N- to C-terminus: Large ribosomal subunit protein uL4 (207 aa).

The interval 49–77 (HAVKNRSAVRGGGKKPWRQKGTGRARQGS) is disordered. Over residues 60-71 (GGKKPWRQKGTG) the composition is skewed to basic residues.

Belongs to the universal ribosomal protein uL4 family. Part of the 50S ribosomal subunit.

Functionally, one of the primary rRNA binding proteins, this protein initially binds near the 5'-end of the 23S rRNA. It is important during the early stages of 50S assembly. It makes multiple contacts with different domains of the 23S rRNA in the assembled 50S subunit and ribosome. Its function is as follows. Forms part of the polypeptide exit tunnel. This chain is Large ribosomal subunit protein uL4, found in Levilactobacillus brevis (strain ATCC 367 / BCRC 12310 / CIP 105137 / JCM 1170 / LMG 11437 / NCIMB 947 / NCTC 947) (Lactobacillus brevis).